The following is a 246-amino-acid chain: Small ribosomal subunit protein uS2 (246 aa).

The protein belongs to the universal ribosomal protein uS2 family.

In Exiguobacterium sp. (strain ATCC BAA-1283 / AT1b), this protein is Small ribosomal subunit protein uS2.